The following is a 137-amino-acid chain: Phosphoinositide-interacting protein (137 aa).

A run of 2 helical transmembrane segments spans residues 56 to 76 and 94 to 114; these read IVIM…TCLA and PGFL…VPII.

Interacts with TRPV1.

The protein localises to the membrane. Functionally, regulatory subunit of TRPV1, a molecular sensor of noxious heat and capsaicin. Positively regulates TRPV1 channel activity via phosphatidylinositol 4,5-bisphosphate (PIP2). Binds various phosphoinositide, including phosphatidylinositol 4,5-bisphosphate (PIP2), but not phosphatidylinositol (PI). This Homo sapiens (Human) protein is Phosphoinositide-interacting protein (PIRT).